The following is a 310-amino-acid chain: AT-hook motif nuclear-localized protein 15 (310 aa).

Disordered regions lie at residues 15-112 (VESP…KESP) and 239-310 (EEEQ…PPSY). Composition is skewed to polar residues over residues 31–41 (SNNNNPPTMTR) and 51–67 (TTNN…SQEE). A DNA-binding region (a.T hook) is located at residues 88–100 (RRPRGRPPGSKNK). Positions 94–104 (PPGSKNKPKSP) are enriched in low complexity. The 140-residue stretch at 112 to 251 (PNSLQSHVLE…QQQEQPLQLE (140 aa)) folds into the PPC domain. Positions 301–310 (GPPPRAPPSY) are enriched in pro residues.

The protein resides in the nucleus. Transcription factor that specifically binds AT-rich DNA sequences related to the nuclear matrix attachment regions (MARs). Binds the DNA sequence GNFEI (GA-negative feedback element I) in the GA3OX1 promoter. Negatively regulates plant innate immunity (PTI) to pathogens through the down-regulation of the PAMP-triggered FRK1 expression. The chain is AT-hook motif nuclear-localized protein 15 from Arabidopsis thaliana (Mouse-ear cress).